We begin with the raw amino-acid sequence, 115 residues long: Divalent-cation tolerance protein CutA (115 aa).

Positions 19, 86, and 87 each coordinate Cu cation.

It belongs to the CutA family. In terms of assembly, homotrimer. Requires Cu cation as cofactor.

The protein resides in the cytoplasm. Functionally, involved in resistance toward heavy metals. The chain is Divalent-cation tolerance protein CutA from Salmonella agona (strain SL483).